An 840-amino-acid chain; its full sequence is Protein translocase subunit SecA (840 aa).

Residues Gln-89, 107 to 111, and Asp-514 contribute to the ATP site; that span reads GEGKT.

Belongs to the SecA family. In terms of assembly, monomer and homodimer. Part of the essential Sec protein translocation apparatus which comprises SecA, SecYEG and auxiliary proteins SecDF-YajC and YidC.

Its subcellular location is the cell inner membrane. It is found in the cytoplasm. The enzyme catalyses ATP + H2O + cellular proteinSide 1 = ADP + phosphate + cellular proteinSide 2.. Functionally, part of the Sec protein translocase complex. Interacts with the SecYEG preprotein conducting channel. Has a central role in coupling the hydrolysis of ATP to the transfer of proteins into and across the cell membrane, serving as an ATP-driven molecular motor driving the stepwise translocation of polypeptide chains across the membrane. This Blochmanniella floridana protein is Protein translocase subunit SecA.